Reading from the N-terminus, the 341-residue chain is Anthranilate phosphoribosyltransferase (341 aa).

5-phospho-alpha-D-ribose 1-diphosphate is bound by residues Gly-84, 87-88, Thr-92, 94-97, 112-120, and Ser-124; these read GD, NVTT, and KCGNRSVSS. Residue Gly-84 participates in anthranilate binding. Mg(2+) is bound at residue Thr-96. Asn-115 is an anthranilate binding site. Arg-170 contributes to the anthranilate binding site. Mg(2+) is bound by residues Asp-228 and Glu-229.

This sequence belongs to the anthranilate phosphoribosyltransferase family. Homodimer. It depends on Mg(2+) as a cofactor.

The enzyme catalyses N-(5-phospho-beta-D-ribosyl)anthranilate + diphosphate = 5-phospho-alpha-D-ribose 1-diphosphate + anthranilate. It participates in amino-acid biosynthesis; L-tryptophan biosynthesis; L-tryptophan from chorismate: step 2/5. Catalyzes the transfer of the phosphoribosyl group of 5-phosphorylribose-1-pyrophosphate (PRPP) to anthranilate to yield N-(5'-phosphoribosyl)-anthranilate (PRA). This chain is Anthranilate phosphoribosyltransferase, found in Corynebacterium diphtheriae (strain ATCC 700971 / NCTC 13129 / Biotype gravis).